A 466-amino-acid polypeptide reads, in one-letter code: 3-isopropylmalate dehydratase large subunit (466 aa).

[4Fe-4S] cluster contacts are provided by Cys347, Cys407, and Cys410.

It belongs to the aconitase/IPM isomerase family. LeuC type 1 subfamily. In terms of assembly, heterodimer of LeuC and LeuD. [4Fe-4S] cluster serves as cofactor.

The enzyme catalyses (2R,3S)-3-isopropylmalate = (2S)-2-isopropylmalate. It functions in the pathway amino-acid biosynthesis; L-leucine biosynthesis; L-leucine from 3-methyl-2-oxobutanoate: step 2/4. In terms of biological role, catalyzes the isomerization between 2-isopropylmalate and 3-isopropylmalate, via the formation of 2-isopropylmaleate. In Vibrio vulnificus (strain CMCP6), this protein is 3-isopropylmalate dehydratase large subunit.